Reading from the N-terminus, the 266-residue chain is MSWFEALILGIVQGLTEYLPVSSSGHLAIGSALFGIEGEENLAFTIVVHVATVFSTLVVLWKEIDWIFRGLFKFQMNAETKYVINILISMIPIGIVGVFFKDTVEQIFGSGLLVVGCMLLLTAALLAFSYYAKPRQKESISMKDAFIIGLAQACAVMPGLSRSGSTIATGLLLGNNKAKLAQFSFLMVIPPILGEALLDVMKMVKGEDVAGDIPALSLAVGFMAAFVSGCVACKWMINIVKKGKLIYFAIYCAIAGLVTIACTLLK.

7 helical membrane-spanning segments follow: residues 41-61, 80-100, 107-127, 140-160, 180-200, 213-233, and 245-265; these read NLAFTIVVHVATVFSTLVVLW, TKYVINILISMIPIGIVGVFF, IFGSGLLVVGCMLLLTAALLA, ISMKDAFIIGLAQACAVMPGL, LAQFSFLMVIPPILGEALLDV, IPALSLAVGFMAAFVSGCVAC, and LIYFAIYCAIAGLVTIACTLL.

It belongs to the UppP family.

It localises to the cell inner membrane. The enzyme catalyses di-trans,octa-cis-undecaprenyl diphosphate + H2O = di-trans,octa-cis-undecaprenyl phosphate + phosphate + H(+). In terms of biological role, catalyzes the dephosphorylation of undecaprenyl diphosphate (UPP). Confers resistance to bacitracin. The polypeptide is Undecaprenyl-diphosphatase (Parabacteroides distasonis (strain ATCC 8503 / DSM 20701 / CIP 104284 / JCM 5825 / NCTC 11152)).